The following is a 316-amino-acid chain: Transaldolase (316 aa).

Lysine 125 functions as the Schiff-base intermediate with substrate in the catalytic mechanism.

The protein belongs to the transaldolase family. Type 1 subfamily. As to quaternary structure, homodimer.

It localises to the cytoplasm. The enzyme catalyses D-sedoheptulose 7-phosphate + D-glyceraldehyde 3-phosphate = D-erythrose 4-phosphate + beta-D-fructose 6-phosphate. The protein operates within carbohydrate degradation; pentose phosphate pathway; D-glyceraldehyde 3-phosphate and beta-D-fructose 6-phosphate from D-ribose 5-phosphate and D-xylulose 5-phosphate (non-oxidative stage): step 2/3. Functionally, transaldolase is important for the balance of metabolites in the pentose-phosphate pathway. In Acidovorax sp. (strain JS42), this protein is Transaldolase.